A 297-amino-acid chain; its full sequence is tRNA pseudouridine synthase A (297 aa).

Asp72 (nucleophile) is an active-site residue. Tyr144 serves as a coordination point for substrate.

This sequence belongs to the tRNA pseudouridine synthase TruA family. As to quaternary structure, homodimer.

It catalyses the reaction uridine(38/39/40) in tRNA = pseudouridine(38/39/40) in tRNA. Formation of pseudouridine at positions 38, 39 and 40 in the anticodon stem and loop of transfer RNAs. This is tRNA pseudouridine synthase A from Mycobacterium bovis (strain ATCC BAA-935 / AF2122/97).